A 185-amino-acid polypeptide reads, in one-letter code: Ribosome-recycling factor (185 aa).

Belongs to the RRF family.

The protein resides in the cytoplasm. Responsible for the release of ribosomes from messenger RNA at the termination of protein biosynthesis. May increase the efficiency of translation by recycling ribosomes from one round of translation to another. This is Ribosome-recycling factor from Dehalococcoides mccartyi (strain ATCC BAA-2266 / KCTC 15142 / 195) (Dehalococcoides ethenogenes (strain 195)).